We begin with the raw amino-acid sequence, 814 residues long: Kinesin-like protein KIF6 (814 aa).

The Kinesin motor domain occupies 5–345; the sequence is TIQIFARVKP…CRFAQRVALI (341 aa). Position 97–104 (97–104) interacts with ATP; sequence GQTGSGKT. Coiled-coil stretches lie at residues 356–385, 456–494, and 588–683; these read NPRL…QRTE, LKEE…EALH, and EAKA…KEFE. The tract at residues 752–788 is disordered; the sequence is LPSPCPSPHSQKQSSTSTPLEDSIPKRPVSSIPLTGD. The segment covering 759 to 771 has biased composition (polar residues); that stretch reads PHSQKQSSTSTPL.

Belongs to the TRAFAC class myosin-kinesin ATPase superfamily. Kinesin family.

The protein resides in the cytoplasm. Its subcellular location is the cytoskeleton. This Homo sapiens (Human) protein is Kinesin-like protein KIF6 (KIF6).